Reading from the N-terminus, the 175-residue chain is Translation initiation factor IF-3 (175 aa).

It belongs to the IF-3 family. As to quaternary structure, monomer.

The protein resides in the cytoplasm. Its function is as follows. IF-3 binds to the 30S ribosomal subunit and shifts the equilibrium between 70S ribosomes and their 50S and 30S subunits in favor of the free subunits, thus enhancing the availability of 30S subunits on which protein synthesis initiation begins. The chain is Translation initiation factor IF-3 from Blochmanniella floridana.